The primary structure comprises 369 residues: Peptide chain release factor 2 (369 aa).

The residue at position 251 (Gln-251) is an N5-methylglutamine.

Belongs to the prokaryotic/mitochondrial release factor family. In terms of processing, methylated by PrmC. Methylation increases the termination efficiency of RF2.

It localises to the cytoplasm. Functionally, peptide chain release factor 2 directs the termination of translation in response to the peptide chain termination codons UGA and UAA. In Chlamydia trachomatis serovar A (strain ATCC VR-571B / DSM 19440 / HAR-13), this protein is Peptide chain release factor 2.